We begin with the raw amino-acid sequence, 125 residues long: Holo-[acyl-carrier-protein] synthase (125 aa).

Residues Asp-8 and Glu-57 each coordinate Mg(2+).

Belongs to the P-Pant transferase superfamily. AcpS family. Mg(2+) is required as a cofactor.

It is found in the cytoplasm. It carries out the reaction apo-[ACP] + CoA = holo-[ACP] + adenosine 3',5'-bisphosphate + H(+). Functionally, transfers the 4'-phosphopantetheine moiety from coenzyme A to a Ser of acyl-carrier-protein. This Natranaerobius thermophilus (strain ATCC BAA-1301 / DSM 18059 / JW/NM-WN-LF) protein is Holo-[acyl-carrier-protein] synthase.